The following is a 311-amino-acid chain: Probable manganese-dependent inorganic pyrophosphatase (311 aa).

6 residues coordinate Mn(2+): H9, D13, D15, D75, H97, and D149.

It belongs to the PPase class C family. Mn(2+) serves as cofactor.

Its subcellular location is the cytoplasm. The enzyme catalyses diphosphate + H2O = 2 phosphate + H(+). This Lactobacillus helveticus (strain DPC 4571) protein is Probable manganese-dependent inorganic pyrophosphatase.